A 591-amino-acid chain; its full sequence is Speriolin (591 aa).

A coiled-coil region spans residues 1 to 42 (MSLLTNYEGLRHQIERLVRENEELKKLVRLIRENHELKSAIK). The interval 1–78 (MSLLTNYEGL…NNGVFLPPSP (78 aa)) is necessary for targeting centrosomes. Over residues 302–314 (NTSDTQAQPSAAQ) the composition is skewed to polar residues. 2 disordered regions span residues 302 to 331 (NTSD…TSPT) and 346 to 435 (ATSY…ENPR). Residues 317–331 (VVPASVPTSPTTSPT) are compositionally biased toward low complexity. 2 stretches are compositionally biased toward polar residues: residues 346 to 357 (ATSYTPSSTTHI) and 390 to 401 (PRTSSSPASVND).

The protein belongs to the speriolin family. As to quaternary structure, found in a complex with CDC20, CDC27 and TUBG1. Interacts with CDC20. Detected only in testis.

The protein localises to the cytoplasm. It localises to the cytoskeleton. It is found in the microtubule organizing center. Its subcellular location is the centrosome. The sequence is that of Speriolin (SPATC1) from Homo sapiens (Human).